A 360-amino-acid chain; its full sequence is Meiotic drive suppressor wtf13 (360 aa).

Polar residues-rich tracts occupy residues 1-10 (MKNNYTSLKS) and 58-70 (DSST…TNPN). 2 disordered regions span residues 1 to 20 (MKNN…ELKT) and 37 to 75 (EEEG…ERRQ). The next 8 membrane-spanning stretches (helical) occupy residues 90-110 (LLIS…CVNP), 120-140 (AFSV…FCFF), 150-170 (CIKV…ISLA), 186-206 (DLVV…FGCV), 222-242 (SSIS…IWTL), 246-266 (LFGL…TKGL), 276-296 (ATGY…LFFY), and 310-330 (FIGN…RGIA).

The protein belongs to the WTF family. In terms of assembly, homomer. Interacts with other proteins that exhibit high sequence similarity.

Its subcellular location is the spore membrane. It is found in the vacuole membrane. Functionally, acts as a suppressor component of the dual wtf meiotic drive system, and can suppress but not confer meiotic drive by compatible poisons. Wtf meiotic drive systems promote unequal transmission of alleles from the parental zygote to progeny spores by encoding a poison and an antidote from the same locus; the poison is trans-acting and forms toxic aggregates in all spores within an ascus, wherease the antidote is spore-specific and targets aggregates for degradation by the vacuole. Meiotic drive by wtf systems therefore lead to poisoning of all progeny that do not inherit the dual poison/antidote allele, or express a compatible antidote. In Schizosaccharomyces kambucha (Fission yeast), this protein is Meiotic drive suppressor wtf13.